The following is a 361-amino-acid chain: tRNA/tmRNA (uracil-C(5))-methyltransferase (361 aa).

5 residues coordinate S-adenosyl-L-methionine: glutamine 185, tyrosine 213, asparagine 218, glutamate 234, and aspartate 294. Catalysis depends on cysteine 319, which acts as the Nucleophile. Glutamate 353 (proton acceptor) is an active-site residue.

The protein belongs to the class I-like SAM-binding methyltransferase superfamily. RNA M5U methyltransferase family. TrmA subfamily.

It catalyses the reaction uridine(54) in tRNA + S-adenosyl-L-methionine = 5-methyluridine(54) in tRNA + S-adenosyl-L-homocysteine + H(+). The catalysed reaction is uridine(341) in tmRNA + S-adenosyl-L-methionine = 5-methyluridine(341) in tmRNA + S-adenosyl-L-homocysteine + H(+). Its function is as follows. Dual-specificity methyltransferase that catalyzes the formation of 5-methyluridine at position 54 (m5U54) in all tRNAs, and that of position 341 (m5U341) in tmRNA (transfer-mRNA). This is tRNA/tmRNA (uracil-C(5))-methyltransferase from Pseudomonas putida (strain ATCC 700007 / DSM 6899 / JCM 31910 / BCRC 17059 / LMG 24140 / F1).